Reading from the N-terminus, the 457-residue chain is tRNA modification GTPase MnmE (457 aa).

(6S)-5-formyl-5,6,7,8-tetrahydrofolate-binding residues include Arg-22, Glu-85, and Arg-124. One can recognise a TrmE-type G domain in the interval 219-378 (GATVVIAGKP…LKEKIYDLVL (160 aa)). Asn-229 lines the K(+) pocket. GTP contacts are provided by residues 229 to 234 (NTGKSS), 248 to 254 (TPVPGTT), 273 to 276 (DTAG), and 333 to 336 (NKAD). Ser-233 lines the Mg(2+) pocket. Residues Thr-248, Val-250, and Thr-253 each contribute to the K(+) site. Residue Thr-254 participates in Mg(2+) binding. Lys-457 contacts (6S)-5-formyl-5,6,7,8-tetrahydrofolate.

This sequence belongs to the TRAFAC class TrmE-Era-EngA-EngB-Septin-like GTPase superfamily. TrmE GTPase family. In terms of assembly, homodimer. Heterotetramer of two MnmE and two MnmG subunits. K(+) is required as a cofactor.

It localises to the cytoplasm. Its function is as follows. Exhibits a very high intrinsic GTPase hydrolysis rate. Involved in the addition of a carboxymethylaminomethyl (cmnm) group at the wobble position (U34) of certain tRNAs, forming tRNA-cmnm(5)s(2)U34. The chain is tRNA modification GTPase MnmE from Syntrophus aciditrophicus (strain SB).